A 156-amino-acid polypeptide reads, in one-letter code: Small ribosomal subunit protein uS7 (156 aa).

This sequence belongs to the universal ribosomal protein uS7 family. In terms of assembly, part of the 30S ribosomal subunit. Contacts proteins S9 and S11.

One of the primary rRNA binding proteins, it binds directly to 16S rRNA where it nucleates assembly of the head domain of the 30S subunit. Is located at the subunit interface close to the decoding center, probably blocks exit of the E-site tRNA. This is Small ribosomal subunit protein uS7 from Frankia alni (strain DSM 45986 / CECT 9034 / ACN14a).